The sequence spans 150 residues: 3-hydroxyacyl-[acyl-carrier-protein] dehydratase FabZ (150 aa).

H56 is a catalytic residue.

The protein belongs to the thioester dehydratase family. FabZ subfamily.

The protein resides in the cytoplasm. It carries out the reaction a (3R)-hydroxyacyl-[ACP] = a (2E)-enoyl-[ACP] + H2O. Its function is as follows. Involved in unsaturated fatty acids biosynthesis. Catalyzes the dehydration of short chain beta-hydroxyacyl-ACPs and long chain saturated and unsaturated beta-hydroxyacyl-ACPs. The protein is 3-hydroxyacyl-[acyl-carrier-protein] dehydratase FabZ of Desulfotalea psychrophila (strain LSv54 / DSM 12343).